The following is a 276-amino-acid chain: Large ribosomal subunit protein uL2 (276 aa).

The span at 28–38 shows a compositional bias: basic and acidic residues; the sequence is RPEKSLTEKLS. Disordered regions lie at residues 28–57 and 219–276; these read RPEKSLTEKLSKKGGRNNQGRLTVRHQGGG and TVRG…RRKK.

This sequence belongs to the universal ribosomal protein uL2 family. As to quaternary structure, part of the 50S ribosomal subunit. Forms a bridge to the 30S subunit in the 70S ribosome.

In terms of biological role, one of the primary rRNA binding proteins. Required for association of the 30S and 50S subunits to form the 70S ribosome, for tRNA binding and peptide bond formation. It has been suggested to have peptidyltransferase activity; this is somewhat controversial. Makes several contacts with the 16S rRNA in the 70S ribosome. In Exiguobacterium sp. (strain ATCC BAA-1283 / AT1b), this protein is Large ribosomal subunit protein uL2.